Reading from the N-terminus, the 1080-residue chain is Origin recognition complex subunit 3 (1080 aa).

3 disordered regions span residues 92–112 (YGIS…DDSS), 566–701 (TIKL…PKRI), and 869–902 (IKNE…ENEQ). Residues 651 to 661 (IKSDLECNDND) show a composition bias toward basic and acidic residues. Acidic residues predominate over residues 662 to 671 (KDNDDNDNDI). Composition is skewed to low complexity over residues 672 to 688 (NENN…NSNN) and 875 to 896 (QQQQ…QQQQ).

This sequence belongs to the ORC3 family. As to quaternary structure, ORC is composed of six subunits.

It is found in the nucleus. Functionally, component of the origin recognition complex (ORC) that binds origins of replication. DNA-binding is ATP-dependent, however specific DNA sequences that define origins of replication have not been identified so far. ORC is required to assemble the pre-replication complex necessary to initiate DNA replication. The polypeptide is Origin recognition complex subunit 3 (orcC) (Dictyostelium discoideum (Social amoeba)).